Reading from the N-terminus, the 110-residue chain is Large ribosomal subunit protein uL22 (110 aa).

This sequence belongs to the universal ribosomal protein uL22 family. In terms of assembly, part of the 50S ribosomal subunit.

Functionally, this protein binds specifically to 23S rRNA; its binding is stimulated by other ribosomal proteins, e.g. L4, L17, and L20. It is important during the early stages of 50S assembly. It makes multiple contacts with different domains of the 23S rRNA in the assembled 50S subunit and ribosome. In terms of biological role, the globular domain of the protein is located near the polypeptide exit tunnel on the outside of the subunit, while an extended beta-hairpin is found that lines the wall of the exit tunnel in the center of the 70S ribosome. In Nitrosomonas eutropha (strain DSM 101675 / C91 / Nm57), this protein is Large ribosomal subunit protein uL22.